Consider the following 471-residue polypeptide: Glutamate--tRNA ligase (471 aa).

Positions 9-19 match the 'HIGH' region motif; that stretch reads PSPTGYLHVGG. 4 residues coordinate Zn(2+): C98, C100, C125, and H127. The short motif at 237-241 is the 'KMSKS' region element; sequence KLSKR. K240 contributes to the ATP binding site.

It belongs to the class-I aminoacyl-tRNA synthetase family. Glutamate--tRNA ligase type 1 subfamily. As to quaternary structure, monomer. Requires Zn(2+) as cofactor.

It localises to the cytoplasm. The enzyme catalyses tRNA(Glu) + L-glutamate + ATP = L-glutamyl-tRNA(Glu) + AMP + diphosphate. Catalyzes the attachment of glutamate to tRNA(Glu) in a two-step reaction: glutamate is first activated by ATP to form Glu-AMP and then transferred to the acceptor end of tRNA(Glu). The protein is Glutamate--tRNA ligase of Salmonella arizonae (strain ATCC BAA-731 / CDC346-86 / RSK2980).